Consider the following 629-residue polypeptide: uncharacterized protein (629 aa).

The span at 1-11 (MSDDQQNGKQN) shows a compositional bias: polar residues. Disordered regions lie at residues 1 to 24 (MSDD…EQDD), 62 to 87 (SNNN…SNYN), 197 to 464 (SEES…SSLI), and 493 to 560 (PTPT…STPD). Low complexity predominate over residues 247–264 (PSSSSSSSSLINSPTTSK). The segment covering 274–288 (PTINPKSLFGLSSTI) has biased composition (polar residues). Residues 294–430 (VKTEKEKEKE…DETLNKETPH (137 aa)) are compositionally biased toward basic and acidic residues. 2 stretches are compositionally biased toward low complexity: residues 434-464 (PHIT…SSLI) and 493-554 (PTPT…NNNN).

This is an uncharacterized protein from Dictyostelium discoideum (Social amoeba).